The sequence spans 294 residues: Tetraspanin-15 (294 aa).

Residues 1–23 (MPRGDSEQVRYCARFSYLWLKFS) are Cytoplasmic-facing. A helical membrane pass occupies residues 24-44 (LIIYSTVFWLIGGLVLSVGIY). Over 45 to 62 (AEAERQKYKTLESAFLAP) the chain is Extracellular. Residues 63–83 (AIILILLGVVMFIVSFIGVLA) traverse the membrane as a helical segment. Residues 84–94 (SLRDNLCLLQS) lie on the Cytoplasmic side of the membrane. The helical transmembrane segment at 95–115 (FMYILGICLVMELIGGIVALI) threads the bilayer. Residues 116 to 235 (FRNQTIDFLN…WFMDNYTIMA (120 aa)) are Extracellular-facing. N118 carries N-linked (GlcNAc...) asparagine glycosylation. Intrachain disulfides connect C154-C219, C155-C185, C171-C179, and C186-C198. 2 N-linked (GlcNAc...) asparagine glycosylation sites follow: N189 and N230. Residues 236-256 (GLLLGILLPQFLGVLLTLLYI) traverse the membrane as a helical segment. Residues 257-294 (TRVEDIILEHSVTDGLLGPGAKSRTDTAGTGCCLCYPD) lie on the Cytoplasmic side of the membrane.

Belongs to the tetraspanin (TM4SF) family. As to quaternary structure, interacts with ADAM10; the interaction influences ADAM10 substrate specificity, endocytosis and turnover. Palmitoylated.

It localises to the cell membrane. The protein localises to the late endosome membrane. Its function is as follows. Part of TspanC8 subgroup, composed of 6 members that interact with the transmembrane metalloprotease ADAM10. This interaction is required for ADAM10 exit from the endoplasmic reticulum and for enzymatic maturation and trafficking to the cell surface as well as substrate specificity. Different TspanC8/ADAM10 complexes have distinct substrates. Promotes ADAM10-mediated cleavage of CDH2. Negatively regulates ligand-induced Notch activity probably by regulating ADAM10 activity. This chain is Tetraspanin-15 (Tspan15), found in Mus musculus (Mouse).